The following is a 274-amino-acid chain: Diaminopimelate epimerase (274 aa).

Substrate contacts are provided by Asn11 and Asn60. Cys69 serves as the catalytic Proton donor. Substrate is bound by residues Gly70–Asn71, Asn191, and Glu209–Arg210. Residue Cys218 is the Proton acceptor of the active site. Gly219–Ser220 serves as a coordination point for substrate.

The protein belongs to the diaminopimelate epimerase family. Homodimer.

Its subcellular location is the cytoplasm. The catalysed reaction is (2S,6S)-2,6-diaminopimelate = meso-2,6-diaminopimelate. It participates in amino-acid biosynthesis; L-lysine biosynthesis via DAP pathway; DL-2,6-diaminopimelate from LL-2,6-diaminopimelate: step 1/1. In terms of biological role, catalyzes the stereoinversion of LL-2,6-diaminopimelate (L,L-DAP) to meso-diaminopimelate (meso-DAP), a precursor of L-lysine and an essential component of the bacterial peptidoglycan. The sequence is that of Diaminopimelate epimerase from Caldanaerobacter subterraneus subsp. tengcongensis (strain DSM 15242 / JCM 11007 / NBRC 100824 / MB4) (Thermoanaerobacter tengcongensis).